The following is a 625-amino-acid chain: DNA-directed RNA polymerase subunit gamma (625 aa).

Residues C71, C73, C86, and C89 each coordinate Zn(2+). D467, D469, and D471 together coordinate Mg(2+).

It belongs to the RNA polymerase beta' chain family. RpoC1 subfamily. As to quaternary structure, in cyanobacteria the RNAP catalytic core is composed of 2 alpha, 1 beta, 1 beta', 1 gamma and 1 omega subunit. When a sigma factor is associated with the core the holoenzyme is formed, which can initiate transcription. Mg(2+) serves as cofactor. It depends on Zn(2+) as a cofactor.

The enzyme catalyses RNA(n) + a ribonucleoside 5'-triphosphate = RNA(n+1) + diphosphate. Functionally, DNA-dependent RNA polymerase catalyzes the transcription of DNA into RNA using the four ribonucleoside triphosphates as substrates. The polypeptide is DNA-directed RNA polymerase subunit gamma (Rippkaea orientalis (strain PCC 8801 / RF-1) (Cyanothece sp. (strain PCC 8801))).